A 541-amino-acid chain; its full sequence is Tyrosine-protein phosphatase non-receptor type 5 (541 aa).

The disordered stretch occupies residues 1–55 (MCCSERLLGLPQPVEMEAPDEAEGLPSKQKEMPPPPPPSPPSEPAQKLPPQGAGS). Pro residues predominate over residues 32–43 (MPPPPPPSPPSE). A run of 2 helical transmembrane segments spans residues 64–84 (LCLF…LSGH) and 122–142 (LLLV…WHLL). The residue at position 221 (S221) is a Phosphoserine; by PKA. T231 bears the Phosphothreonine; by MAPK mark. S244 carries the phosphoserine; by MAPK modification. Positions 276–531 (LQAEFFEIPM…QFVHHAMSLY (256 aa)) constitute a Tyrosine-protein phosphatase domain. Substrate contacts are provided by residues D437, 472 to 478 (CSAGIGR), and Q516. The active-site Phosphocysteine intermediate is the C472.

The protein belongs to the protein-tyrosine phosphatase family. Non-receptor class subfamily. Post-translationally, phosphorylation at Ser-221 by PKA deactivates PTPN5. Phosphorylation at Thr-231 and Ser-244 by MAPKs stabilizes the phosphatase, dephosphorylation of these sites results in ubiquitin-mediated degradation of the active phosphatase. As to expression, STEP20 is expressed only in the CNS.

It is found in the endoplasmic reticulum membrane. Its subcellular location is the cytoplasm. The enzyme catalyses O-phospho-L-tyrosyl-[protein] + H2O = L-tyrosyl-[protein] + phosphate. Functionally, may regulate the activity of several effector molecules involved in synaptic plasticity and neuronal cell survival, including MAPKs, Src family kinases and NMDA receptors. The polypeptide is Tyrosine-protein phosphatase non-receptor type 5 (Ptpn5) (Mus musculus (Mouse)).